A 436-amino-acid chain; its full sequence is Mitochondrial substrate carrier family protein Y (436 aa).

Residues 1–102 (MENNNKNINT…NINNNNINKK (102 aa)) are disordered. Over 1-137 (MENNNKNINT…GGFLAGLSRN (137 aa)) the chain is Mitochondrial intermembrane. Solcar repeat units follow at residues 135–226 (SRNV…TLKY) and 236–334 (HDTL…LKKQ). Residues 138–158 (VTRIIGSFSSGMAEESAGYPL) form a helical membrane-spanning segment. Over 159–194 (DLIKTRIQLSQSGVSGGGGTNTSIIKIFKDVIKTEG) the chain is Mitochondrial matrix. A helical transmembrane segment spans residues 195 to 215 (VIGLFKGLSSPLILSALVTAI). Residues 216 to 238 (QFGLFEDTLKYFRKHQYFKNHDT) are Mitochondrial intermembrane-facing. The helical transmembrane segment at 239 to 259 (LSLLFSGSIAGFAQSFITCPV) threads the bilayer. Residues 260-313 (DLVKIQMQIQGIPSSQPNSNNNNNNNKAKGNSYFTKLIYREKGLLGFYQGLSPT) lie on the Mitochondrial matrix side of the membrane. Residues 314 to 334 (LFRDVPGLAIFFTTYETLKKQ) traverse the membrane as a helical segment. Residues 335 to 347 (FGQPELSTQSPTE) lie on the Mitochondrial intermembrane side of the membrane. The helical transmembrane segment at 348-368 (FIKSFIPIVLSGGSAGVFYHG) threads the bilayer. The Solcar 3 repeat unit spans residues 350-436 (KSFIPIVLSG…FLVYEMVINL (87 aa)). Residues 369-413 (LTHPFDIAKTLIQSDRSATKYKGTFDCLKQVYQNQGPKSLFKGFS) lie on the Mitochondrial matrix side of the membrane. Residues 414 to 434 (AVAIKSFQSNAVGFLVYEMVI) traverse the membrane as a helical segment. Residues 435-436 (NL) lie on the Mitochondrial intermembrane side of the membrane.

Belongs to the mitochondrial carrier (TC 2.A.29) family.

The protein resides in the mitochondrion inner membrane. In terms of biological role, mitochondrial solute carriers shuttle metabolites, nucleotides, and cofactors through the mitochondrial inner membrane. The protein is Mitochondrial substrate carrier family protein Y (mcfY) of Dictyostelium discoideum (Social amoeba).